Here is a 127-residue protein sequence, read N- to C-terminus: Ribosome-binding factor A (127 aa).

This sequence belongs to the RbfA family. As to quaternary structure, monomer. Binds 30S ribosomal subunits, but not 50S ribosomal subunits or 70S ribosomes.

The protein localises to the cytoplasm. In terms of biological role, one of several proteins that assist in the late maturation steps of the functional core of the 30S ribosomal subunit. Associates with free 30S ribosomal subunits (but not with 30S subunits that are part of 70S ribosomes or polysomes). Required for efficient processing of 16S rRNA. May interact with the 5'-terminal helix region of 16S rRNA. The polypeptide is Ribosome-binding factor A (Chloroflexus aurantiacus (strain ATCC 29366 / DSM 635 / J-10-fl)).